A 639-amino-acid chain; its full sequence is Tetracycline resistance protein TetM from transposon Tn5251 (639 aa).

A tr-type G domain is found at 1-242 (MKIINIGVLA…VITNKFYSST (242 aa)). Residues 10–17 (AHVDAGKT), 74–78 (DTPGH), and 128–131 (NKID) each bind GTP.

Belongs to the TRAFAC class translation factor GTPase superfamily. Classic translation factor GTPase family. TetM/TetO subfamily.

Its function is as follows. Abolishes the inhibitory effect of tetracyclin on protein synthesis by a non-covalent modification of the ribosomes. In Streptococcus pneumoniae, this protein is Tetracycline resistance protein TetM from transposon Tn5251 (tetM(5251)).